The primary structure comprises 456 residues: tRNA modification GTPase MnmE (456 aa).

Arginine 24, glutamate 81, and lysine 120 together coordinate (6S)-5-formyl-5,6,7,8-tetrahydrofolate. The TrmE-type G domain maps to 216–379 (GMTVVIAGRP…LREHLKACMG (164 aa)). Asparagine 226 contributes to the K(+) binding site. GTP-binding positions include 226–231 (NAGKSS), 245–251 (TEIAGTT), 270–273 (DTAG), 335–338 (NKAD), and 359–361 (SAR). Serine 230 serves as a coordination point for Mg(2+). Threonine 245, isoleucine 247, and threonine 250 together coordinate K(+). Position 251 (threonine 251) interacts with Mg(2+). Lysine 456 lines the (6S)-5-formyl-5,6,7,8-tetrahydrofolate pocket.

This sequence belongs to the TRAFAC class TrmE-Era-EngA-EngB-Septin-like GTPase superfamily. TrmE GTPase family. In terms of assembly, homodimer. Heterotetramer of two MnmE and two MnmG subunits. It depends on K(+) as a cofactor.

It localises to the cytoplasm. Functionally, exhibits a very high intrinsic GTPase hydrolysis rate. Involved in the addition of a carboxymethylaminomethyl (cmnm) group at the wobble position (U34) of certain tRNAs, forming tRNA-cmnm(5)s(2)U34. This Pseudomonas syringae pv. syringae (strain B728a) protein is tRNA modification GTPase MnmE.